The following is a 651-amino-acid chain: Polyadenylate-binding protein 1 (651 aa).

Over residues 1–27 (MSSTESPVPAAAAPAEAVPASTPAPAA) the composition is skewed to low complexity. Residues 1–42 (MSSTESPVPAAAAPAEAVPASTPAPAAEQPAVGNGEQRNNAD) form a disordered region. RRM domains are found at residues 47–125 (TSLY…WSQR), 135–211 (GNIF…HHIP), 227–304 (TNVY…RAQK), and 330–407 (VNLY…LAQR). 2 disordered regions span residues 481 to 554 (QPGQ…EADQ) and 632 to 651 (QNDS…KTEA). Positions 529–540 (AGQPVPGQPMPR) are enriched in pro residues. The 78-residue stretch at 555–632 (PGALTAAALA…ALEVLKEYQQ (78 aa)) folds into the PABC domain. Positions 636-651 (AGAEAEANAEAPKTEA) are enriched in low complexity.

It belongs to the polyadenylate-binding protein type-1 family. In terms of assembly, part of large ribonucleoprotein complexes (mRNPs) containing RNA-binding proteins RRM4 and PAB1, endosome-binding protein UPA1, core scaffold protein UPA2 and associated factor GRP1. Interacts (via PABC domain) with UPA1 (via PAM2 domain). Interacts (via PABC domain) with UPA2 (via PAM2 domains).

It is found in the cytoplasm. The protein resides in the cytoskeleton. The protein localises to the endosome. RNA-binding protein involved in the formation of polar-growing hyphae which is essential for infection by the plant pathogen. Component of endosomal mRNA transport that regulates polarity of the infectious hyphae by transporting a broad spectrum of cargo mRNAs from the nucleus to cell poles. This chain is Polyadenylate-binding protein 1, found in Mycosarcoma maydis (Corn smut fungus).